Reading from the N-terminus, the 966-residue chain is Protein STICHEL-like 4 (966 aa).

Disordered stretches follow at residues 64-118 and 200-237; these read RSLR…DRSS and RDNA…REQN. Basic and acidic residues predominate over residues 75-84; sequence LKEDHQDSRE. The span at 98 to 108 shows a compositional bias: polar residues; it reads PIVSFGTSKVT. A compositionally biased stretch (basic and acidic residues) spans 109 to 118; that stretch reads PSDEKFDRSS. A compositionally biased stretch (polar residues) spans 208–217; the sequence is SEMSIASNSV. A compositionally biased stretch (basic and acidic residues) spans 219 to 236; sequence RGEKYEGEEGGGGRDREQ. 384–391 serves as a coordination point for ATP; it reads GPNGTGKT. 4 residues coordinate Zn(2+): Cys-403, Cys-412, Cys-415, and Cys-418. Positions 650–678 form a coiled coil; the sequence is SKEDMEKLKQALKTLSESEKQLRVSNDKL. The span at 706–717 shows a compositional bias: polar residues; sequence FNHTPLTDSDPS. The disordered stretch occupies residues 706 to 733; the sequence is FNHTPLTDSDPSNHVVAGTRRDDSKQGF.

The protein belongs to the DnaX/STICHEL family.

This is Protein STICHEL-like 4 from Arabidopsis thaliana (Mouse-ear cress).